The following is a 300-amino-acid chain: Putative heme-binding peroxidase (300 aa).

Catalysis depends on H39, which acts as the Proton acceptor. Disordered stretches follow at residues 44–64 and 116–135; these read YDKS…EAEG and GRTD…LPDA. The span at 116–126 shows a compositional bias: basic and acidic residues; it reads GRTDFADDSRV. Position 163 (H163) interacts with heme b. W179 (tryptophan radical intermediate) is an active-site residue.

The protein belongs to the peroxidase family. Cytochrome c peroxidase subfamily. The cofactor is heme b.

In terms of biological role, destroys radicals which are normally produced within the cells and which are toxic to biological systems. The protein is Putative heme-binding peroxidase of Pyricularia oryzae (strain 70-15 / ATCC MYA-4617 / FGSC 8958) (Rice blast fungus).